We begin with the raw amino-acid sequence, 357 residues long: tRNA N6-adenosine threonylcarbamoyltransferase (357 aa).

His120 and His124 together coordinate Fe cation. Residues 143–147 (LVSGG), Asp176, Gly189, and Asn289 each bind substrate. Asp317 lines the Fe cation pocket.

Belongs to the KAE1 / TsaD family. Fe(2+) serves as cofactor.

The protein resides in the cytoplasm. The catalysed reaction is L-threonylcarbamoyladenylate + adenosine(37) in tRNA = N(6)-L-threonylcarbamoyladenosine(37) in tRNA + AMP + H(+). Functionally, required for the formation of a threonylcarbamoyl group on adenosine at position 37 (t(6)A37) in tRNAs that read codons beginning with adenine. Is involved in the transfer of the threonylcarbamoyl moiety of threonylcarbamoyl-AMP (TC-AMP) to the N6 group of A37, together with TsaE and TsaB. TsaD likely plays a direct catalytic role in this reaction. The polypeptide is tRNA N6-adenosine threonylcarbamoyltransferase (Polynucleobacter necessarius subsp. necessarius (strain STIR1)).